A 1170-amino-acid chain; its full sequence is NPC intracellular sterol transporter 1-related protein 1 (1170 aa).

An N-terminal signal peptide occupies residues 1–19 (MNVLWIIALVGQLMRLVQG). 8 disulfide bridges follow: C23-C75, C29-C41, C64-C110, C76-C114, C98-C230, C101-C156, C223-C235, and C232-C239. N-linked (GlcNAc...) asparagine glycosylation is found at N123, N145, and N178. A helical membrane pass occupies residues 260 to 280 (LSVLIFYTICALFAFMWYYLC). An N-linked (GlcNAc...) asparagine glycan is attached at N314. The helical transmembrane segment at 341–361 (ILITTVFSIFVFSFIIFQYAT) threads the bilayer. A glycan (N-linked (GlcNAc...) asparagine) is linked at N401. Cystine bridges form between C438–C447 and C473–C480. N513 carries an N-linked (GlcNAc...) asparagine glycan. The next 6 helical transmembrane spans lie at 556–576 (NDISTVAISYLMMFLYATWAL), 585–605 (LLLGISGLLIVLASIVCAAGF), 616–636 (IIAEVIPFLILAIGIDNIFLI), 667–687 (ILMSLLCQTGCFLIAAFVTMP), 698–718 (VSVIFNGVLQLTAYVSILSLY), and 752–772 (IIIIFSAWFFTSLVFLPEIQF). The 161-residue stretch at 557–717 (DISTVAISYL…LTAYVSILSL (161 aa)) folds into the SSD domain. Cystine bridges form between C822–C828, C868–C925, C869–C891, and C879–C888. 2 N-linked (GlcNAc...) asparagine glycosylation sites follow: N900 and N940. 5 helical membrane passes run 1000–1020 (LTLKLIGSAIILIFFISSVFL), 1027–1047 (FLLALVVTMIIVDIGALMALL), 1054–1074 (VSLVNLIICVGLGVEFCVHIV), 1099–1119 (IGESVIKGITLTKFIGVCVLA), and 1133–1153 (MWFTLIIVAALHALLFLPALL).

It belongs to the patched family.

It is found in the vacuole membrane. Its function is as follows. Involved in sphingolipid trafficking. May recycle sphingolipids between cellular membranous compartments. The sequence is that of NPC intracellular sterol transporter 1-related protein 1 from Saccharomyces cerevisiae (strain ATCC 204508 / S288c) (Baker's yeast).